The sequence spans 165 residues: Choriogonadotropin subunit beta 3 (165 aa).

Residues 1-20 (MEMFQGLLLLLLLSMGGTWA) form the signal peptide. Disulfide bonds link C29–C77, C43–C92, C46–C130, C54–C108, C58–C110, and C113–C120. N-linked (GlcNAc...) asparagine glycans are attached at residues N33 and N50. The segment at 131-165 (DDPRFQDSSSSKAPPPSLPSPSRLPGPSDTPILPQ) is disordered. O-linked (GalNAc...) serine glycans are attached at residues S141, S147, S152, and S158. Residues 143–154 (APPPSLPSPSRL) are compositionally biased toward pro residues.

This sequence belongs to the glycoprotein hormones subunit beta family. As to quaternary structure, heterodimer of a common alpha chain identical in LH, FSH, TSH and HCG and a unique beta chain distinct in each of the hormones. High expression in the placenta throughout pregnancy.

It is found in the secreted. Functionally, beta subunit of the human chorionic gonadotropin (hCG). hCG is a complex glycoprotein composed of two glycosylated subunits alpha and beta which are non-covalently associated. The alpha subunit is identical to those in the pituitary gonadotropin hormones (LH, FSH and TSH). The beta subunits are distinct in each of the hormones and confer receptor and biological specificity. Has an essential role in pregnancy and maternal adaptation. Stimulates the ovaries to synthesize the steroids that are essential for the maintenance of pregnancy. The chain is Choriogonadotropin subunit beta 3 (CGB3) from Homo sapiens (Human).